Consider the following 512-residue polypeptide: Maturase K (512 aa).

The protein belongs to the intron maturase 2 family. MatK subfamily.

The protein resides in the plastid. It localises to the chloroplast. In terms of biological role, usually encoded in the trnK tRNA gene intron. Probably assists in splicing its own and other chloroplast group II introns. This Oenothera biennis (German evening primrose) protein is Maturase K.